Reading from the N-terminus, the 430-residue chain is uncharacterized protein (430 aa).

Helical transmembrane passes span 36–56 (LFVVSISQIFGGAGLAAGVTV), 69–89 (AFAGLPSALFTLGSAGSALIV), 100–122 (TGLSAGFMIGGLGAIGVIMAAII), 126–148 (FLLFISLLIYGAGTATNLQARYA), 160–180 (TAVSITMVFTTFGAVAGPSLV), 197–217 (GPFILAAAAYMLAGVVLFIML), 253–273 (IIVGATVMVLTQIVMVAIMTM), 285–305 (LGAVGLVIGFHIGAMYLPSLV), 317–337 (AMAISSGTTLLLAGVIAAFAP), 340–360 (SMILLVIALSLLGLGWNFGLI), 384–404 (VLIALSGAAGGALSGMIVAGS), and 406–426 (YLALSLIGGILSLLLIPVVVW).

This sequence belongs to the major facilitator superfamily.

It is found in the cell membrane. This is an uncharacterized protein from Bacillus subtilis (strain 168).